Consider the following 264-residue polypeptide: Pro-opiomelanocortin (264 aa).

The first 26 residues, 1 to 26 (MPRSCCSRSGALLLALLLQASMEVRG), serve as a signal peptide directing secretion. F87 carries the post-translational modification Phenylalanine amide. Disordered regions lie at residues 88–204 (GRRN…DLEH) and 219–238 (RMEHFRWGSPPKDKRYGGFM). N-linked (GlcNAc...) asparagine glycosylation occurs at N91. Composition is skewed to basic and acidic residues over residues 99-122 (QKREDVAAGEDRGLLPEGGPEPRG) and 130-142 (REGKRSYSMEHFR). Residue E131 is modified to Glutamic acid 1-amide. Residue S135 is modified to N-acetylserine; in Corticotropin. V147 carries the valine amide modification. At S165 the chain carries Phosphoserine. Over residues 172–186 (EFKRELTGQRPRAGD) the composition is skewed to basic and acidic residues. The span at 189–199 (DGPADDGAGPR) shows a compositional bias: low complexity. Positions 219 to 234 (RMEHFRWGSPPKDKRY) are enriched in basic and acidic residues.

It belongs to the POMC family. Specific enzymatic cleavages at paired basic residues yield the different active peptides. As to expression, ACTH and MSH are produced by the pituitary gland.

It localises to the secreted. Functionally, stimulates the adrenal glands to release cortisol. Its function is as follows. Anorexigenic peptide. Increases the pigmentation of skin by increasing melanin production in melanocytes. Increases the pigmentation of skin by increasing melanin production in melanocytes. In terms of biological role, endogenous orexigenic opiate. Functionally, endogenous opiate. The chain is Pro-opiomelanocortin (POMC) from Macaca nemestrina (Pig-tailed macaque).